We begin with the raw amino-acid sequence, 395 residues long: Acetate kinase (395 aa).

Asn-7 lines the Mg(2+) pocket. An ATP-binding site is contributed by Lys-14. Position 92 (Arg-92) interacts with substrate. The Proton donor/acceptor role is filled by Asp-149. Residues 207 to 211 (HLGNG), 282 to 284 (DMR), and 329 to 333 (GIGEN) contribute to the ATP site. Glu-382 contacts Mg(2+).

It belongs to the acetokinase family. As to quaternary structure, homodimer. Requires Mg(2+) as cofactor. Mn(2+) serves as cofactor.

Its subcellular location is the cytoplasm. It catalyses the reaction acetate + ATP = acetyl phosphate + ADP. It functions in the pathway metabolic intermediate biosynthesis; acetyl-CoA biosynthesis; acetyl-CoA from acetate: step 1/2. Its function is as follows. Catalyzes the formation of acetyl phosphate from acetate and ATP. Can also catalyze the reverse reaction. This chain is Acetate kinase, found in Brachyspira hyodysenteriae (strain ATCC 49526 / WA1).